We begin with the raw amino-acid sequence, 183 residues long: Ribulose bisphosphate carboxylase small subunit, chloroplastic 7 (183 aa).

The transit peptide at 1–43 (MAAAMMNKTVVVGKESVKGGVAPKVAMSRGGFLNSGIMKKDRD) directs the protein to the chloroplast.

This sequence belongs to the RuBisCO small chain family. As to quaternary structure, heterohexadecamer of 8 large and 8 small subunits.

The protein localises to the plastid. The protein resides in the chloroplast. In terms of biological role, ruBisCO catalyzes two reactions: the carboxylation of D-ribulose 1,5-bisphosphate, the primary event in carbon dioxide fixation, as well as the oxidative fragmentation of the pentose substrate. Both reactions occur simultaneously and in competition at the same active site. Although the small subunit is not catalytic it is essential for maximal activity. This chain is Ribulose bisphosphate carboxylase small subunit, chloroplastic 7, found in Acetabularia peniculus (Green alga).